A 445-amino-acid polypeptide reads, in one-letter code: Phosphoglucosamine mutase (445 aa).

The active-site Phosphoserine intermediate is the Ser102. Positions 102, 241, 243, and 245 each coordinate Mg(2+). Ser102 bears the Phosphoserine mark.

This sequence belongs to the phosphohexose mutase family. Mg(2+) is required as a cofactor. Activated by phosphorylation.

The enzyme catalyses alpha-D-glucosamine 1-phosphate = D-glucosamine 6-phosphate. Catalyzes the conversion of glucosamine-6-phosphate to glucosamine-1-phosphate. The protein is Phosphoglucosamine mutase of Aliivibrio fischeri (strain MJ11) (Vibrio fischeri).